The primary structure comprises 349 residues: sn-glycerol-3-phosphate import ATP-binding protein UgpC (349 aa).

Positions 4-234 (ISLRDVRKSY…PATTFVAGFI (231 aa)) constitute an ABC transporter domain. Residue 36–43 (GPSGCGKS) participates in ATP binding.

Belongs to the ABC transporter superfamily. sn-glycerol-3-phosphate importer (TC 3.A.1.1.3) family. The complex is composed of two ATP-binding proteins (UgpC), two transmembrane proteins (UgpA and UgpE) and a solute-binding protein (UgpB).

The protein resides in the cell inner membrane. It carries out the reaction sn-glycerol 3-phosphate(out) + ATP + H2O = sn-glycerol 3-phosphate(in) + ADP + phosphate + H(+). In terms of biological role, part of the ABC transporter complex UgpBAEC involved in sn-glycerol-3-phosphate (G3P) import. Responsible for energy coupling to the transport system. This is sn-glycerol-3-phosphate import ATP-binding protein UgpC from Cereibacter sphaeroides (strain ATCC 17023 / DSM 158 / JCM 6121 / CCUG 31486 / LMG 2827 / NBRC 12203 / NCIMB 8253 / ATH 2.4.1.) (Rhodobacter sphaeroides).